Consider the following 172-residue polypeptide: Ribosome maturation factor RimM (172 aa).

The 73-residue stretch at 96 to 168 (DGEFYYHEII…RVDVEILEGL (73 aa)) folds into the PRC barrel domain.

Belongs to the RimM family. As to quaternary structure, binds ribosomal protein uS19.

Its subcellular location is the cytoplasm. Functionally, an accessory protein needed during the final step in the assembly of 30S ribosomal subunit, possibly for assembly of the head region. Essential for efficient processing of 16S rRNA. May be needed both before and after RbfA during the maturation of 16S rRNA. It has affinity for free ribosomal 30S subunits but not for 70S ribosomes. In Streptococcus pneumoniae serotype 4 (strain ATCC BAA-334 / TIGR4), this protein is Ribosome maturation factor RimM.